Here is a 1514-residue protein sequence, read N- to C-terminus: ABC transporter C family member 5 (1514 aa).

10 helical membrane passes run 16–36 (LLEL…LFAV), 76–96 (FGFN…VLVL), 111–131 (FVLC…FLVL), 142–162 (PFLV…TMYV), 177–197 (SHVV…FLAW), 312–332 (VFAG…SYFV), 334–354 (YLGG…IFFT), 421–441 (WYLH…AILY), 446–466 (IAAV…IPLA), and 533–553 (FIFW…SIFL). Residues 307–588 (AACNAVFAGL…FPDLVSMMAQ (282 aa)) enclose the ABC transmembrane type-1 1 domain. The 224-residue stretch at 622-845 (IEIKDGVFCW…GTDFKALVSA (224 aa)) folds into the ABC transporter 1 domain. 657–664 (GTVGSGKS) contributes to the ATP binding site. The stretch at 899 to 927 (ASDLKAIKEKKKKAKRSRKKQLVQEEERV) forms a coiled coil. The next 6 membrane-spanning stretches (helical) occupy residues 946-966 (GALI…QIAS), 986-1006 (PTLL…FIFV), 1078-1098 (IVAV…PVAV), 1117-1137 (IVSI…AGAA), 1155-1175 (LLDC…WLCL), and 1180-1200 (LSTL…HGTI). The 283-residue stretch at 949–1231 (IPLIILAQAA…WILSFCKLEN (283 aa)) folds into the ABC transmembrane type-1 2 domain. Residues 1268 to 1502 (IELVDVKVRY…KSSMFLKLVT (235 aa)) enclose the ABC transporter 2 domain. 1302-1309 (GRTGSGKS) contacts ATP.

This sequence belongs to the ABC transporter superfamily. ABCC family. Conjugate transporter (TC 3.A.1.208) subfamily. Ubiquitous, mostly in vascular tissues and epidermis, including guard cells.

It is found in the membrane. It carries out the reaction ATP + H2O + xenobioticSide 1 = ADP + phosphate + xenobioticSide 2.. With respect to regulation, (E(2)17G) transport activity in negatively regulated by organic anions such as oestradiol-3-sulfate, luteolin-7-O-diglucuronide-4'-O-glucuronide, glycocholate, vanadate and the sulfonylurea glibenclamide, and, to a lower extent, by bafilomycin A1, NH(4)Cl, GSH, GSSG and DNB-GS. Pump for glutathione S-conjugates. Involved in regulation of K(+) and Na(+) cell content. Mediates resistance to NaCl and Li(+), confers sensitivity to sulfonylurea drugs such as glibenclamide (inducer of stomatal opening), and required for stomatal opening regulation by auxin, abscisic acid (ABA) and external Ca(2+). Transports oestradiol-17-(beta-D-glucuronide) (E(2)17G). Involved in the root auxin content regulation that controls the transition from primary root elongation to lateral root formation. Plays a role in ABA-mediated germination inhibition. High-affinity inositol hexakisphosphate transporter that plays a role in guard cell signaling and phytic acid storage. Required for phytic acid accumulation in developing seeds. Phytic acid is the primary storage form of phosphorus in cereal grains and other plant seeds. The polypeptide is ABC transporter C family member 5 (ABCC5) (Arabidopsis thaliana (Mouse-ear cress)).